The following is a 386-amino-acid chain: MTASVLLHPRWIEPTVMFLYDNGGGLVADELNKNMEGAAAAAAAAAAAAAAGAGGGGFPHPAAAAAGGNFSVAAAAAAAAAAAANQCRNLMAHPAPLAPGAAAAYSSAPGEAPPSAAAAAAAAAAAAAAAAAASSSGGPGPAGPAGAEAAKQCSPCSAAAQSSSGPAALPYGYFGSGYYPCARMGPHPNAIKSCAQPASAAAAFADKYMDTAGPAAEEFSSRAKEFAFYHQGYAAGPYHHHQPVPGYLDMPVVPGLGGPGESRHEPLGLPMESYQPWALPNGWNGQMYCPKEQTQPPHLWKSTLPDVVSHPSDASSYRRGRKKRVPYTKVQLKELEREYATNKFITKDKRRRISATTNLSERQVTIWFQNRRVKEKKVINKLKTTS.

Positions 320–379 (GRKKRVPYTKVQLKELEREYATNKFITKDKRRRISATTNLSERQVTIWFQNRRVKEKKVI) form a DNA-binding region, homeobox.

The protein belongs to the Abd-B homeobox family. As to quaternary structure, binds DNA as a homodimer. Interacts with MEIS1, MEIS2 and MEIS3.

The protein resides in the nucleus. Functionally, sequence-specific, AT-rich binding transcription factor which is part of a developmental regulatory system that provides cells with specific positional identities on the anterior-posterior axis. The protein is Homeobox protein Hox-A13 (Hoxa13) of Mus musculus (Mouse).